A 343-amino-acid polypeptide reads, in one-letter code: Nuclear hormone receptor family member nhr-167 (343 aa).

The nuclear receptor DNA-binding region spans 5 to 81 (HQKCAVCGRF…VGMTLPSYLL (77 aa)). 2 consecutive NR C4-type zinc fingers follow at residues 8–28 (CAVCGRFTTEFNYSVLSCNSC) and 45–64 (CFRGERCFEKTPYIFKCTSC). The region spanning 101–339 (THNKRMDSLF…KKLVKDGIEA (239 aa)) is the NR LBD domain.

It belongs to the nuclear hormone receptor family.

The protein resides in the nucleus. Functionally, orphan nuclear receptor. This is Nuclear hormone receptor family member nhr-167 (nhr-167) from Caenorhabditis elegans.